Consider the following 991-residue polypeptide: Mediator of RNA polymerase II transcription subunit 5 (991 aa).

The protein belongs to the Mediator complex subunit 5 family. As to quaternary structure, component of the Mediator complex.

It localises to the nucleus. In terms of biological role, component of the Mediator complex, a coactivator involved in the regulated transcription of nearly all RNA polymerase II-dependent genes. Mediator functions as a bridge to convey information from gene-specific regulatory proteins to the basal RNA polymerase II transcription machinery. Mediator is recruited to promoters by direct interactions with regulatory proteins and serves as a scaffold for the assembly of a functional preinitiation complex with RNA polymerase II and the general transcription factors. This Yarrowia lipolytica (strain CLIB 122 / E 150) (Yeast) protein is Mediator of RNA polymerase II transcription subunit 5 (NUT1).